A 447-amino-acid polypeptide reads, in one-letter code: MDLRRIMETVNMIDNENLDLRTTTMGISLLDCIDSDSDRACQKIYDKITTKAENLVKVARELETEYGIPIANKRITVTPISLIAAASGDSDYVKYAVTLDKAAKAVGVDLIGGFSALVHKGYQNGDRVLIKSIPQALKETERVCSSVNVGSTRSGINMDAVKEMGQIVIENEKINPLNNGNLVIFCNAVEDNPFMAGGFHGVGESDVALNVGVSGPGVVKTALEKVKGESMDVVAETIKQTAFKVTRMGQLVGQEASKRLGVDFGIVDLSLAPTPAQGDSVANILEEIGLESVGTHGTTAALAMLNDAVKKGGIMACSHVGGLSGAFIPESEDAGMIAAAEKGILTVDKLEAMTAVCSVGLDMIAVPGDTPAETISAMIADEAAIGMINNKTTAVRVIPVPGKEVGDSIEFGGLFGYAPIMPVHKESSAAMINRGGRIPAPVHSFKN.

Belongs to the UPF0210 family. Homodimer.

The chain is UPF0210 protein Ldb1026 from Lactobacillus delbrueckii subsp. bulgaricus (strain ATCC 11842 / DSM 20081 / BCRC 10696 / JCM 1002 / NBRC 13953 / NCIMB 11778 / NCTC 12712 / WDCM 00102 / Lb 14).